The chain runs to 172 residues: Adenine phosphoribosyltransferase (172 aa).

The protein belongs to the purine/pyrimidine phosphoribosyltransferase family. Homodimer.

It is found in the cytoplasm. It carries out the reaction AMP + diphosphate = 5-phospho-alpha-D-ribose 1-diphosphate + adenine. Its pathway is purine metabolism; AMP biosynthesis via salvage pathway; AMP from adenine: step 1/1. Functionally, catalyzes a salvage reaction resulting in the formation of AMP, that is energically less costly than de novo synthesis. The sequence is that of Adenine phosphoribosyltransferase from Gloeothece citriformis (strain PCC 7424) (Cyanothece sp. (strain PCC 7424)).